The primary structure comprises 500 residues: Beta-xylosidase (500 aa).

The active-site Proton donor is the glutamate 160. Glutamate 277 serves as the catalytic Nucleophile.

This sequence belongs to the glycosyl hydrolase 39 family.

It catalyses the reaction Hydrolysis of (1-&gt;4)-beta-D-xylans, to remove successive D-xylose residues from the non-reducing termini.. In Thermoanaerobacterium saccharolyticum (strain DSM 8691 / JW/SL-YS485), this protein is Beta-xylosidase (xynB).